Reading from the N-terminus, the 104-residue chain is Phosphoribosyl-ATP pyrophosphatase (104 aa).

It belongs to the PRA-PH family.

It is found in the cytoplasm. It catalyses the reaction 1-(5-phospho-beta-D-ribosyl)-ATP + H2O = 1-(5-phospho-beta-D-ribosyl)-5'-AMP + diphosphate + H(+). The protein operates within amino-acid biosynthesis; L-histidine biosynthesis; L-histidine from 5-phospho-alpha-D-ribose 1-diphosphate: step 2/9. The polypeptide is Phosphoribosyl-ATP pyrophosphatase (Nitrosococcus oceani (strain ATCC 19707 / BCRC 17464 / JCM 30415 / NCIMB 11848 / C-107)).